A 307-amino-acid chain; its full sequence is Transmembrane and coiled-coil domain-containing protein 5B (307 aa).

Residues 17 to 207 adopt a coiled-coil conformation; it reads FASSLEAVKQ…LEKQISKAQD (191 aa). The helical transmembrane segment at 243–265 threads the bilayer; the sequence is YFQYLTFMVLVFIRLLAYVIFHL.

Belongs to the TMCO5 family.

The protein resides in the membrane. The protein is Transmembrane and coiled-coil domain-containing protein 5B (TMCO5B) of Homo sapiens (Human).